The sequence spans 339 residues: HTH-type transcriptional regulator KdgR (339 aa).

The 56-residue stretch at T9–I64 folds into the HTH lacI-type domain. The H-T-H motif DNA-binding region spans I11–N30.

Transcriptional repressor of the kdgRKAT and kduID operons for pectin utilization. The chain is HTH-type transcriptional regulator KdgR (kdgR) from Bacillus subtilis (strain 168).